A 348-amino-acid chain; its full sequence is Dihydroorotase (348 aa).

Zn(2+) is bound by residues His17 and His19. Residues 19 to 21 (HLR) and Asn45 each bind substrate. Zn(2+) is bound by residues Lys103, His140, and His178. Position 103 is an N6-carboxylysine (Lys103). Position 140 (His140) interacts with substrate. Leu223 contributes to the substrate binding site. Asp251 serves as a coordination point for Zn(2+). Asp251 is an active-site residue. Substrate is bound by residues His255 and Ala267.

This sequence belongs to the metallo-dependent hydrolases superfamily. DHOase family. Class II DHOase subfamily. Homodimer. Requires Zn(2+) as cofactor.

The catalysed reaction is (S)-dihydroorotate + H2O = N-carbamoyl-L-aspartate + H(+). It functions in the pathway pyrimidine metabolism; UMP biosynthesis via de novo pathway; (S)-dihydroorotate from bicarbonate: step 3/3. In terms of biological role, catalyzes the reversible cyclization of carbamoyl aspartate to dihydroorotate. The polypeptide is Dihydroorotase (Shigella dysenteriae serotype 1 (strain Sd197)).